The following is a 1684-amino-acid chain: GRIP and coiled-coil domain-containing protein 2 (1684 aa).

N-acetylmethionine is present on M1. The disordered stretch occupies residues 1–22; it reads MEDLVQDGVASPATPGTGKSKL. At S11 the chain carries Phosphoserine. Phosphothreonine is present on T14. Positions 110 to 1618 form a coiled coil; it reads VTKMGDAHKE…REKSAANLEY (1509 aa). S236, S1483, and S1487 each carry phosphoserine. The interval 1475–1502 is disordered; it reads LKNEPTTRSPVSSQQSLKNLRERRNTDL. Positions 1477–1492 are enriched in polar residues; that stretch reads NEPTTRSPVSSQQSLK. The mediates interaction with RAB6A stretch occupies residues 1574–1613; the sequence is HLNGLLRETEATNAILMEQIKLLKSEIRRLERNQEREKSA. The tract at residues 1574-1684 is mediates interaction with RAB9A; sequence HLNGLLRETE…SYLHSWSGLR (111 aa). The 51-residue stretch at 1609–1659 folds into the GRIP domain; that stretch reads REKSAANLEYLKNVLLQFIFLKPGSERERLLPVINTMLQLSPEEKGKLAAV.

In terms of assembly, homodimer. Interacts (via GRIP domain) with RAB6A (preferentially in its GTP-bound form). May interact (RAB6A-dependent) with ARL1; according to PubMed:19703403, RAB6A and ARL1 are not involved in GCC2 Golgi localization as proposed by PubMed:18243103. Interacts (probably via GRIP domain) with RAB9A (preferentially in its GTP-bound form). Interacts with CLASP1 and CLASP2; recruits both proteins to membranes of the TGN. Interacts with STX16. Ubiquitous.

The protein resides in the cytoplasm. The protein localises to the golgi apparatus. Its subcellular location is the trans-Golgi network membrane. Its function is as follows. Golgin which probably tethers transport vesicles to the trans-Golgi network (TGN) and regulates vesicular transport between the endosomes and the Golgi. As a RAB9A effector it is involved in recycling of the mannose 6-phosphate receptor from the late endosomes to the TGN. May also play a role in transport between the recycling endosomes and the Golgi. Required for maintenance of the Golgi structure, it is involved in the biogenesis of noncentrosomal, Golgi-associated microtubules through recruitment of CLASP1 and CLASP2. The protein is GRIP and coiled-coil domain-containing protein 2 (GCC2) of Homo sapiens (Human).